Reading from the N-terminus, the 279-residue chain is uncharacterized protein (279 aa).

The protein belongs to the peptidase C59 family.

This is an uncharacterized protein from Chlorella (PBCV-1).